The following is a 269-amino-acid chain: Expansin-B1 (269 aa).

A signal peptide spans 1-24; that stretch reads MGSLANNIMVVGAVLAALVAGGSC. N-linked (GlcNAc...) asparagine glycosylation occurs at Asn-34. An Expansin-like EG45 domain is found at 63 to 169; sequence GGACGIKNVN…RRVRCKYPAG (107 aa). Intrachain disulfides connect Cys-66/Cys-94, Cys-97/Cys-164, and Cys-102/Cys-108. The Expansin-like CBD domain occupies 183 to 264; the sequence is NYLAVLVKYV…NWRPDAVYTS (82 aa).

This sequence belongs to the expansin family. Expansin B subfamily. Expressed in anthers and pollen.

The protein resides in the secreted. Its subcellular location is the cell wall. It localises to the membrane. Functionally, may aid fertilization by loosening the cell wall of the stigma and style, thereby facilitating penetration of the pollen tube. Acts selectively on grass cell walls, which are relatively poor in pectins and xyloglucans and rich in glucuronoarabinoxylans and (1-3),(1-4)-beta-D-glucans, when compared with cell walls of other angiosperms, including other monocots. The sequence is that of Expansin-B1 (EXPB1) from Zea mays (Maize).